The following is a 168-amino-acid chain: Thiol peroxidase (168 aa).

Positions 20–168 (PAVGSQLPAF…DYDKALAALA (149 aa)) constitute a Thioredoxin domain. C62 functions as the Cysteine sulfenic acid (-SOH) intermediate in the catalytic mechanism. C62 and C96 are disulfide-bonded.

This sequence belongs to the peroxiredoxin family. Tpx subfamily. Homodimer.

It catalyses the reaction a hydroperoxide + [thioredoxin]-dithiol = an alcohol + [thioredoxin]-disulfide + H2O. Its function is as follows. Thiol-specific peroxidase that catalyzes the reduction of hydrogen peroxide and organic hydroperoxides to water and alcohols, respectively. Plays a role in cell protection against oxidative stress by detoxifying peroxides. This chain is Thiol peroxidase, found in Chlorobaculum tepidum (strain ATCC 49652 / DSM 12025 / NBRC 103806 / TLS) (Chlorobium tepidum).